The sequence spans 605 residues: Formin-binding protein 1-like (605 aa).

Residues 1–263 enclose the F-BAR domain; the sequence is MSWGTELWDQ…AAKSVDERRD (263 aa). Positions 66–258 form a coiled coil; that stretch reads FTSCIAFFNI…EGMILAAKSV (193 aa). Residues 245–535 form an interaction with CDC42 region; sequence SKCLEGMILA…EFDDEFEDDD (291 aa). At Ser-295 the chain carries Phosphoserine. The disordered stretch occupies residues 325-345; sequence FGKKPKPQSPPLTPTSLFTSS. Residues 392 to 484 are a coiled coil; it reads LEDFSHLPPE…VEGKTGVRGD (93 aa). In terms of domain architecture, REM-1 spans 397 to 474; the sequence is HLPPEQRRKK…IHKNEAWLSE (78 aa). The segment covering 480 to 490 has biased composition (basic and acidic residues); the sequence is GVRGDRRHSSD. Positions 480–539 are disordered; the sequence is GVRGDRRHSSDINHLVTQGRESPEGSYTDDANQEVRGPPQQHGHHSEFDDEFEDDDPLPA. Phosphoserine occurs at positions 488, 501, and 505. An interaction with DNM1 region spans residues 522-605; it reads GHHSEFDDEF…VTLEKNSKGS (84 aa). Acidic residues predominate over residues 527–536; sequence FDDEFEDDDP. Residues 538–599 enclose the SH3 domain; sequence PAIGHCKAIY…PTTYIDVTLE (62 aa). The segment at 541 to 597 is interaction with DNM2 and WASL; the sequence is GHCKAIYPFDGHNEGTLAMKEGEVLYIIEEDKGDGWTRARRQNGEEGYVPTTYIDVT. An interaction with DAAM1, DIAPH1 and DIAPH2 region spans residues 541–605; the sequence is GHCKAIYPFD…VTLEKNSKGS (65 aa).

This sequence belongs to the FNBP1 family. Homodimerizes, the dimers can polymerize end-to-end to form filamentous structures. Interacts with GTP-bound CDC42. Interacts with DAAM1, DIAPH1, DIAPH2, DNM1, DNM2 and WASL/N-WASP. Interacts with ATG3. Interacts (via SH3 domain) with ABI1, WASF2, CDC42 and WIPF1. As to expression, isoform 1 is expressed in brain. Isoform 2 is expressed in brain, kidney and lung. Within the brain expression is seen in cortical neurons, hippocampal pyramidal neurons, hypothalamus and piriform cortex.

Its subcellular location is the cytoplasm. It localises to the cytoskeleton. It is found in the cell cortex. The protein resides in the cytoplasmic vesicle. The protein localises to the cell membrane. In terms of biological role, required to coordinate membrane tubulation with reorganization of the actin cytoskeleton during endocytosis. May bind to lipids such as phosphatidylinositol 4,5-bisphosphate and phosphatidylserine and promote membrane invagination and the formation of tubules. Also promotes CDC42-induced actin polymerization by activating the WASL-WASPIP complex, the predominant form of WASL/N-WASP in cells. Actin polymerization may promote the fission of membrane tubules to form endocytic vesicles. Essential for autophagy of intracellular bacterial pathogens. May negatively regulate neurite extension and axon branching in developing neurons. The chain is Formin-binding protein 1-like (Fnbp1l) from Rattus norvegicus (Rat).